Consider the following 915-residue polypeptide: Transferrin-binding protein A (915 aa).

A signal peptide spans 1 to 24 (MQQQHLFRLNILCLSLMTALPAYA). The TonB box motif lies at 38–45 (DTIQVKAK). Residues 51–176 (RDNEVTGLGK…LAGSVAFQTK (126 aa)) enclose the TBDR plug domain. A TBDR beta-barrel domain is found at 187–915 (QWGIQSKTAY…NYTFSLEMKF (729 aa)). The segment covering 526–540 (LKTPPQNNGKKTSPN) has biased composition (polar residues). The interval 526 to 545 (LKTPPQNNGKKTSPNGREKN) is disordered. The TonB C-terminal box motif lies at 898–915 (NRYAAPGRNYTFSLEMKF).

The protein belongs to the TonB-dependent receptor family. As to quaternary structure, binds both human apo- and holo-transferrin (TF), via the TF C-terminus. Forms a large complex with TF and TbpB.

It localises to the cell outer membrane. Functionally, neisseria acquires iron by extracting it from serum transferrin (TF) in its human host. Acts as a TF receptor and is required for TF utilization. Binds both apo- and holo-TF, via the TF C-terminus. This Neisseria gonorrhoeae protein is Transferrin-binding protein A.